The primary structure comprises 134 residues: Cystatin-1 (134 aa).

The N-terminal stretch at 1–17 is a signal peptide; sequence MKAIYLILTVLCGFSAS. Residues 21-116 form the Cystatin domain; sequence GGWRDKDVDD…CTAIIWTRSW (96 aa). A Secondary area of contact motif is present at residues 65–69; sequence QVVSG. 2 disulfide bridges follow: Cys-83/Cys-96 and Cys-107/Cys-127.

It belongs to the cystatin family. In terms of tissue distribution, expressed by the venom gland.

It localises to the secreted. Functionally, inhibits various C1 cysteine proteases. This protein has no toxic activity and its function in the venom is unknown. It may play a role as a housekeeping or regulatory protein. This chain is Cystatin-1, found in Chilobrachys guangxiensis (Chinese earth tiger tarantula).